A 269-amino-acid polypeptide reads, in one-letter code: Protein LNK3 (269 aa).

As to quaternary structure, interacts with REV8.

Functionally, probable transcriptional coactivator. The protein is Protein LNK3 of Arabidopsis thaliana (Mouse-ear cress).